The chain runs to 306 residues: MELKDYYAIMGVKPTDDLKTIKTAYRRLARKYHPDVSKEPDAEARFKEVAEAWEVLSDEQRRAEYDQMWQHRNDPQFNRQFHHGDGQSFNAEDFDDIFSSIFGQHARQSRQRPATRGHDIEIEVAVFLEETLTEHKRTISYNLPVYNAFGMIEQEIPKTLNVKIPAGVGNGQRIRLKGQGTPGENGGPNGDLWLVIHIAPHPLFDIVGQDLEIVVPVSPWEAALGTKVTVPTLKESILLTIPPGSQAGQRLRVKGKGLVSKKQTGDLYAVLKIVMPPKPDENTAALWQQLADAQSSFDPRKDWGKA.

Positions 5 to 69 constitute a J domain; sequence DYYAIMGVKP…QRRAEYDQMW (65 aa).

The protein localises to the cytoplasm. It localises to the nucleoid. Its function is as follows. DNA-binding protein that preferentially recognizes a curved DNA sequence. It is probably a functional analog of DnaJ; displays overlapping activities with DnaJ, but functions under different conditions, probably acting as a molecular chaperone in an adaptive response to environmental stresses other than heat shock. Lacks autonomous chaperone activity; binds native substrates and targets them for recognition by DnaK. Its activity is inhibited by the binding of CbpM. In Escherichia coli O127:H6 (strain E2348/69 / EPEC), this protein is Curved DNA-binding protein.